We begin with the raw amino-acid sequence, 264 residues long: Thymidylate synthase (264 aa).

R21 provides a ligand contact to dUMP. H51 contacts (6R)-5,10-methylene-5,6,7,8-tetrahydrofolate. 126 to 127 (RR) serves as a coordination point for dUMP. C146 serves as the catalytic Nucleophile. Residues 166 to 169 (RSAD), N177, and 207 to 209 (HIY) each bind dUMP. Residue D169 coordinates (6R)-5,10-methylene-5,6,7,8-tetrahydrofolate. A263 lines the (6R)-5,10-methylene-5,6,7,8-tetrahydrofolate pocket.

It belongs to the thymidylate synthase family. Bacterial-type ThyA subfamily. In terms of assembly, homodimer.

It localises to the cytoplasm. It carries out the reaction dUMP + (6R)-5,10-methylene-5,6,7,8-tetrahydrofolate = 7,8-dihydrofolate + dTMP. The protein operates within pyrimidine metabolism; dTTP biosynthesis. In terms of biological role, catalyzes the reductive methylation of 2'-deoxyuridine-5'-monophosphate (dUMP) to 2'-deoxythymidine-5'-monophosphate (dTMP) while utilizing 5,10-methylenetetrahydrofolate (mTHF) as the methyl donor and reductant in the reaction, yielding dihydrofolate (DHF) as a by-product. This enzymatic reaction provides an intracellular de novo source of dTMP, an essential precursor for DNA biosynthesis. This chain is Thymidylate synthase, found in Parabacteroides distasonis (strain ATCC 8503 / DSM 20701 / CIP 104284 / JCM 5825 / NCTC 11152).